The following is a 216-amino-acid chain: ATP phosphoribosyltransferase (216 aa).

It belongs to the ATP phosphoribosyltransferase family. Short subfamily. Heteromultimer composed of HisG and HisZ subunits.

Its subcellular location is the cytoplasm. The catalysed reaction is 1-(5-phospho-beta-D-ribosyl)-ATP + diphosphate = 5-phospho-alpha-D-ribose 1-diphosphate + ATP. The protein operates within amino-acid biosynthesis; L-histidine biosynthesis; L-histidine from 5-phospho-alpha-D-ribose 1-diphosphate: step 1/9. Its function is as follows. Catalyzes the condensation of ATP and 5-phosphoribose 1-diphosphate to form N'-(5'-phosphoribosyl)-ATP (PR-ATP). Has a crucial role in the pathway because the rate of histidine biosynthesis seems to be controlled primarily by regulation of HisG enzymatic activity. The sequence is that of ATP phosphoribosyltransferase from Nitrosomonas europaea (strain ATCC 19718 / CIP 103999 / KCTC 2705 / NBRC 14298).